Here is a 349-residue protein sequence, read N- to C-terminus: MIRQAIAKVVELRDLSEGEMIEVMNQIMSGECTPAQIGSFITALRMKGETIAEISGAARVMRERATPIRVGRNVLDIDRDDINLDQETILDVVGTGGDGTNTFNISTTVSFIVSACGVKVAKHGNRSVSSACGSADVLEKLGVNLDVTPEQVERCINEIGIGFLFAPALHGAMKHAIGPRREIGIRTIFNILGPLTNPANADCQVMGVYREELVAKMAGVLHHLGCKRGFVVHGRDGMDEITLTGETAAAEVSPEGVRLFTITPEEFGFSRCSMQALKGGDAVANAAIVRAVLGGEPGPRREIVLLNAGFALLAAGRCATVAAGIDLAAQAIDSGAALMQIEKLATLTN.

5-phospho-alpha-D-ribose 1-diphosphate is bound by residues glycine 94, 97–98 (GD), threonine 102, 104–107 (NIST), 122–130 (KHGNRSVSS), and serine 134. Glycine 94 is a binding site for anthranilate. Residue serine 106 coordinates Mg(2+). Asparagine 125 is a binding site for anthranilate. An anthranilate-binding site is contributed by arginine 180. Mg(2+) is bound by residues aspartate 239 and glutamate 240.

Belongs to the anthranilate phosphoribosyltransferase family. In terms of assembly, homodimer. Mg(2+) serves as cofactor.

The enzyme catalyses N-(5-phospho-beta-D-ribosyl)anthranilate + diphosphate = 5-phospho-alpha-D-ribose 1-diphosphate + anthranilate. It functions in the pathway amino-acid biosynthesis; L-tryptophan biosynthesis; L-tryptophan from chorismate: step 2/5. In terms of biological role, catalyzes the transfer of the phosphoribosyl group of 5-phosphorylribose-1-pyrophosphate (PRPP) to anthranilate to yield N-(5'-phosphoribosyl)-anthranilate (PRA). The sequence is that of Anthranilate phosphoribosyltransferase from Trichlorobacter lovleyi (strain ATCC BAA-1151 / DSM 17278 / SZ) (Geobacter lovleyi).